The sequence spans 196 residues: Probable malonic semialdehyde reductase RutE (196 aa).

Belongs to the nitroreductase family. HadB/RutE subfamily. It depends on FMN as a cofactor.

It catalyses the reaction 3-hydroxypropanoate + NADP(+) = 3-oxopropanoate + NADPH + H(+). May reduce toxic product malonic semialdehyde to 3-hydroxypropionic acid, which is excreted. The polypeptide is Probable malonic semialdehyde reductase RutE (Klebsiella pneumoniae (strain 342)).